The chain runs to 623 residues: Trehalase (623 aa).

This sequence belongs to the glycosyl hydrolase 15 family. As to quaternary structure, monomer.

It catalyses the reaction alpha,alpha-trehalose + H2O = alpha-D-glucose + beta-D-glucose. It participates in glycan degradation; trehalose degradation; D-glucose from alpha,alpha-trehalose: step 1/1. Its activity is regulated as follows. Inhibited by validamycin A. Its function is as follows. Catalyzes the hydrolysis of alpha,alpha-trehalose into two molecules of D-glucose. This chain is Trehalase, found in Thermoplasma volcanium (strain ATCC 51530 / DSM 4299 / JCM 9571 / NBRC 15438 / GSS1).